We begin with the raw amino-acid sequence, 158 residues long: Cytosine deaminase (158 aa).

Residues Lys-9–Val-129 enclose the CMP/dCMP-type deaminase domain. Asn-51 lines the substrate pocket. Zn(2+) is bound at residue His-62. Glu-64 functions as the Proton donor in the catalytic mechanism. Residues Cys-91 and Cys-94 each coordinate Zn(2+). A substrate-binding site is contributed by Asp-155.

Belongs to the cytidine and deoxycytidylate deaminase family. In terms of assembly, homodimer. It depends on Zn(2+) as a cofactor.

The protein resides in the cytoplasm. The protein localises to the nucleus. The catalysed reaction is cytosine + H2O + H(+) = uracil + NH4(+). The protein operates within pyrimidine metabolism; UMP biosynthesis via salvage pathway; uracil from cytosine: step 1/1. Functionally, catalyzes the hydrolytic deamination of cytosine to uracil or 5-methylcytosine to thymine. Is involved in the pyrimidine salvage pathway, which allows the cell to utilize cytosine for pyrimidine nucleotide synthesis. The sequence is that of Cytosine deaminase from Saccharomyces cerevisiae (strain ATCC 204508 / S288c) (Baker's yeast).